The chain runs to 60 residues: Potassium channel toxin MeuTXKalpha3 (60 aa).

Residues 1-22 (MKNYCGIITLFLAIISATGVFC) form the signal peptide. 3 cysteine pairs are disulfide-bonded: Cys32-Cys50, Cys37-Cys55, and Cys41-Cys57. Residue Pro59 is modified to Proline amide.

This sequence belongs to the short scorpion toxin superfamily. Potassium channel inhibitor family. As to expression, expressed by the venom gland.

It is found in the secreted. In terms of biological role, may block voltage-gated potassium channels (Kv). In Mesobuthus eupeus (Lesser Asian scorpion), this protein is Potassium channel toxin MeuTXKalpha3.